The sequence spans 438 residues: Keratin, type I cytoskeletal 13 (438 aa).

The head stretch occupies residues 1–95; the sequence is MSCRFQSSSM…SVDGGLLSGN (95 aa). Omega-N-methylarginine occurs at positions 27 and 35. The segment at 96–131 is coil; it reads EKITMQNLNDRLASYLEKVRALEAANADLEVKIRDW. The region spanning 96–408 is the IF rod domain; sequence EKITMQNLND…SLLEGQDAKM (313 aa). Positions 132–150 are linker 1; it reads HLKQSPTSPERDYSAYYKT. The tract at residues 151–242 is coil 1B; that stretch reads IEELRIKILE…KNHEEEMKEF (92 aa). The segment at 243 to 265 is linker 12; that stretch reads SNQAVGQVNVEMDATPGIDLTRV. Positions 266–404 are coil 2; the sequence is LAEMREQYEA…ATYRSLLEGQ (139 aa). The segment at 405–438 is tail; sequence DAKMTGFNTGGNSTTTSNTSTSPSTSGRPDFRKY. The disordered stretch occupies residues 408–438; it reads MTGFNTGGNSTTTSNTSTSPSTSGRPDFRKY. The segment covering 409-431 has biased composition (low complexity); that stretch reads TGFNTGGNSTTTSNTSTSPSTSG.

The protein belongs to the intermediate filament family. In terms of assembly, heterotetramer of two type I and two type II keratins. O-glycosylated; glycans consist of single N-acetylglucosamine residues.

Its function is as follows. Type 1 keratin. Maintains postnatal tongue mucosal cell homeostasis and tissue organization in response to mechanical stress, potentially via regulation of the G1/S phase cyclins CCNE1 and CCNE2. The protein is Keratin, type I cytoskeletal 13 of Rattus norvegicus (Rat).